A 419-amino-acid polypeptide reads, in one-letter code: Pregnancy-specific beta-1-glycoprotein 4 (419 aa).

A signal peptide spans Met-1–Ala-34. One can recognise an Ig-like V-type domain in the interval Gln-35–Leu-144. N-linked (GlcNAc...) asparagine glycosylation is found at Asn-104, Asn-111, Asn-199, Asn-268, Asn-299, and Asn-303. 3 consecutive Ig-like C2-type domains span residues Pro-147 to Asn-234, Pro-237 to Asn-327, and Pro-332 to Thr-410. 3 cysteine pairs are disulfide-bonded: Cys-169–Cys-217, Cys-262–Cys-310, and Cys-354–Cys-394.

Belongs to the immunoglobulin superfamily. CEA family.

The protein resides in the secreted. The protein is Pregnancy-specific beta-1-glycoprotein 4 (PSG4) of Homo sapiens (Human).